A 140-amino-acid chain; its full sequence is Large ribosomal subunit protein bL17 (140 aa).

Belongs to the bacterial ribosomal protein bL17 family. As to quaternary structure, part of the 50S ribosomal subunit. Contacts protein L32.

The protein is Large ribosomal subunit protein bL17 of Paramagnetospirillum magneticum (strain ATCC 700264 / AMB-1) (Magnetospirillum magneticum).